A 575-amino-acid polypeptide reads, in one-letter code: Beta-amylase (575 aa).

Residues 1–36 (MLHSQKRIWKKIGLCLLSFILGITVFTGSFGSKAEA) form the signal peptide. Position 77 (Asp77) interacts with substrate. Residues Glu84 and Asp88 each contribute to the Ca(2+) site. The substrate site is built by His117 and Asp125. A disulfide bridge connects residues Cys119 and Cys127. Position 171 (Glu171) interacts with Ca(2+). Glu199 (proton donor) is an active-site residue. 3 residues coordinate substrate: Lys315, His320, and Thr358. The Proton acceptor role is filled by Glu395. Residues 396-397 (NA) and Arg424 contribute to the substrate site.

This sequence belongs to the glycosyl hydrolase 14 family. Monomer. Requires Ca(2+) as cofactor.

It carries out the reaction Hydrolysis of (1-&gt;4)-alpha-D-glucosidic linkages in polysaccharides so as to remove successive maltose units from the non-reducing ends of the chains.. In Niallia circulans (Bacillus circulans), this protein is Beta-amylase.